The chain runs to 96 residues: Small ribosomal subunit protein bS6 (96 aa).

Belongs to the bacterial ribosomal protein bS6 family.

In terms of biological role, binds together with bS18 to 16S ribosomal RNA. In Streptococcus pneumoniae serotype 2 (strain D39 / NCTC 7466), this protein is Small ribosomal subunit protein bS6.